Reading from the N-terminus, the 366-residue chain is Galactoside alpha-(1,2)-fucosyltransferase 1 (366 aa).

Residues 1–8 (MWPRSHRH) lie on the Cytoplasmic side of the membrane. The chain crosses the membrane as a helical; Signal-anchor for type II membrane protein span at residues 9 to 25 (LCLAFLLVCVLSAISFL). Residues 26-366 (IHFHQDSIRH…LSPLWPLAEP (341 aa)) are Lumenal-facing. N-linked (GlcNAc...) asparagine glycosylation is found at Asn66, Asn302, and Asn328.

This sequence belongs to the glycosyltransferase 11 family.

The protein resides in the golgi apparatus. Its subcellular location is the golgi stack membrane. It carries out the reaction a beta-D-galactosyl-(1-&gt;4)-N-acetyl-beta-D-glucosaminyl derivative + GDP-beta-L-fucose = an alpha-L-Fuc-(1-&gt;2)-beta-D-Gal-(1-&gt;4)-beta-D-GlcNAc derivative + GDP + H(+). It catalyses the reaction a ganglioside GA1 + GDP-beta-L-fucose = a ganglioside Fuc-GA1 + GDP + H(+). The enzyme catalyses a beta-D-Gal-(1-&gt;3)-beta-D-GlcNAc-(1-&gt;3)-beta-D-Gal-(1-&gt;4)-beta-D-Glc-(1&lt;-&gt;1')-Cer(d18:1(4E)) + GDP-beta-L-fucose = alpha-L-fucosyl-(1-&gt;2)- beta-D-galactosyl-(1-&gt;3)-N-acetyl-beta-D-glucosaminyl-(1-&gt;3)-beta-D-galactosyl-(1-&gt;4)-beta-D-glucosyl-(1&lt;-&gt;1')-N-acylsphing-4-enine + GDP + H(+). The catalysed reaction is a neolactoside nLc4Cer(d18:1(4E)) + GDP-beta-L-fucose = a neolactoside IV(2)-alpha-Fuc-nLc4Cer(d18:1(4E)) + GDP + H(+). It carries out the reaction a ganglioside GM1 + GDP-beta-L-fucose = a ganglioside Fuc-GM1 + GDP + H(+). It catalyses the reaction beta-D-galactosyl-(1-&gt;3)-N-acetyl-D-galactosamine + GDP-beta-L-fucose = alpha-L-fucosyl-(1-&gt;2)-beta-D-galactosyl-(1-&gt;3)-N-acetyl-D-galactosamine + GDP + H(+). The protein operates within protein modification; protein glycosylation. Catalyzes the transfer of L-fucose, from a guanosine diphosphate-beta-L-fucose, to the terminal galactose residue of glycoconjugates through an alpha(1,2) linkage leading to H antigen synthesis that is an intermediate substrate in the synthesis of ABO blood group antigens. H antigen is essential for maturation of the glomerular layer of the main olfactory bulb, in cell migration and early cell-cell contacts during tumor associated angiogenesis. Preferentially fucosylates soluble lactose and to a lesser extent fucosylates glycolipids gangliosides GA1 and GM1a. The protein is Galactoside alpha-(1,2)-fucosyltransferase 1 of Saimiri boliviensis boliviensis (Bolivian squirrel monkey).